The sequence spans 380 residues: Cytochrome b (380 aa).

Helical transmembrane passes span 34–54, 78–99, 114–134, and 179–199; these read FGSLLGICLATQILTGLLLAM, WLIRNLHANGASLFFICIYMHI, WNTGIILLLTLMATAFVGYVL, and FFALHFLLPFLIAGLTLIHLT. Heme b is bound by residues histidine 84 and histidine 98. Heme b-binding residues include histidine 183 and histidine 197. Histidine 202 is an a ubiquinone binding site. A run of 4 helical transmembrane segments spans residues 227–247, 289–309, 321–341, and 348–368; these read LKDILGFMLMYLPLMTLALFT, LGGVLALAASVLILFLSPLLH, LSQSLFWLLVTNLLILTWVGS, and FIIIGQLASLSYFTTLLILLP.

This sequence belongs to the cytochrome b family. As to quaternary structure, the cytochrome bc1 complex contains 11 subunits: 3 respiratory subunits (MT-CYB, CYC1 and UQCRFS1), 2 core proteins (UQCRC1 and UQCRC2) and 6 low-molecular weight proteins (UQCRH/QCR6, UQCRB/QCR7, UQCRQ/QCR8, UQCR10/QCR9, UQCR11/QCR10 and a cleavage product of UQCRFS1). This cytochrome bc1 complex then forms a dimer. The cofactor is heme b.

It localises to the mitochondrion inner membrane. Functionally, component of the ubiquinol-cytochrome c reductase complex (complex III or cytochrome b-c1 complex) that is part of the mitochondrial respiratory chain. The b-c1 complex mediates electron transfer from ubiquinol to cytochrome c. Contributes to the generation of a proton gradient across the mitochondrial membrane that is then used for ATP synthesis. The polypeptide is Cytochrome b (MT-CYB) (Falco peregrinus (Peregrine falcon)).